The sequence spans 414 residues: Alanine--glyoxylate aminotransferase (414 aa).

A mitochondrion-targeting transit peptide spans 1–23; the sequence is MFRMLAKASVTLGSRAAGWVRTM. Position 231 is an N6-(pyridoxal phosphate)lysine (K231). N6-acetyllysine; alternate is present on K247. K247 is subject to N6-succinyllysine; alternate. K256 is subject to N6-acetyllysine. Residue K330 is modified to N6-acetyllysine; alternate. An N6-succinyllysine; alternate modification is found at K330. K334 carries the N6-acetyllysine modification. A substrate-binding site is contributed by R382. The Microbody targeting signal motif lies at 412–414; sequence NKL.

Belongs to the class-V pyridoxal-phosphate-dependent aminotransferase family. In terms of assembly, homodimer. Pyridoxal 5'-phosphate is required as a cofactor.

The protein resides in the peroxisome. It localises to the mitochondrion matrix. It carries out the reaction L-serine + pyruvate = 3-hydroxypyruvate + L-alanine. The catalysed reaction is glyoxylate + L-alanine = glycine + pyruvate. Its function is as follows. Catalyzes the transamination of glyoxylate to glycine and contributes to the glyoxylate detoxification. Catalyzes the transamination between L-serine and pyruvate and weakly contributes to gluconeogenesis from the L-serine metabolism. The chain is Alanine--glyoxylate aminotransferase from Mus musculus (Mouse).